The chain runs to 360 residues: Ribosomal RNA large subunit methyltransferase F (360 aa).

Residues 1-36 (MSKLISKQGKRPALSQSGLAKPSTSKKSSASKNANT) form a disordered region. Residues 23-36 (STSKKSSASKNANT) show a composition bias toward low complexity.

It belongs to the methyltransferase superfamily. METTL16/RlmF family.

The protein resides in the cytoplasm. It catalyses the reaction adenosine(1618) in 23S rRNA + S-adenosyl-L-methionine = N(6)-methyladenosine(1618) in 23S rRNA + S-adenosyl-L-homocysteine + H(+). Specifically methylates the adenine in position 1618 of 23S rRNA. The protein is Ribosomal RNA large subunit methyltransferase F of Shewanella denitrificans (strain OS217 / ATCC BAA-1090 / DSM 15013).